The following is a 647-amino-acid chain: Chaperone protein DnaK (647 aa).

Thr200 is subject to Phosphothreonine; by autocatalysis. Residues 611–631 (AGEQGAAGAAGAGAQQQAQPQ) show a composition bias toward low complexity. Residues 611–647 (AGEQGAAGAAGAGAQQQAQPQDDNVVDAEFKEVNDKK) are disordered. The segment covering 638 to 647 (AEFKEVNDKK) has biased composition (basic and acidic residues).

It belongs to the heat shock protein 70 family.

In terms of biological role, acts as a chaperone. The protein is Chaperone protein DnaK of Cupriavidus taiwanensis (strain DSM 17343 / BCRC 17206 / CCUG 44338 / CIP 107171 / LMG 19424 / R1) (Ralstonia taiwanensis (strain LMG 19424)).